The following is a 368-amino-acid chain: Quinolinate synthase (368 aa).

The iminosuccinate site is built by His-46 and Ser-63. Cys-110 lines the [4Fe-4S] cluster pocket. Iminosuccinate contacts are provided by residues 141-143 (YVN) and Ser-162. Cys-230 is a binding site for [4Fe-4S] cluster. Residues 256-258 (HPE) and Thr-273 each bind iminosuccinate. Position 320 (Cys-320) interacts with [4Fe-4S] cluster.

Belongs to the quinolinate synthase family. Type 3 subfamily. Requires [4Fe-4S] cluster as cofactor.

The protein localises to the cytoplasm. The catalysed reaction is iminosuccinate + dihydroxyacetone phosphate = quinolinate + phosphate + 2 H2O + H(+). It functions in the pathway cofactor biosynthesis; NAD(+) biosynthesis; quinolinate from iminoaspartate: step 1/1. In terms of biological role, catalyzes the condensation of iminoaspartate with dihydroxyacetone phosphate to form quinolinate. The chain is Quinolinate synthase from Bacillus anthracis (strain A0248).